Here is a 318-residue protein sequence, read N- to C-terminus: Olfactory receptor 13C5 (318 aa).

The Extracellular portion of the chain corresponds to 1 to 25; sequence MEWENHTILVEFFLKGLSGHPRLEL. An N-linked (GlcNAc...) asparagine glycan is attached at asparagine 5. Residues 26 to 46 form a helical membrane-spanning segment; that stretch reads LFFVLIFIMYVVILLGNGTLI. Residues 47–54 lie on the Cytoplasmic side of the membrane; that stretch reads LISILDPH. A helical membrane pass occupies residues 55-75; that stretch reads LHTPMYFFLGNLSFLDICYTT. At 76-99 the chain is on the extracellular side; the sequence is TSIPSTLVSFLSERKTISLSGCAV. A disulfide bridge connects residues cysteine 97 and cysteine 189. A helical membrane pass occupies residues 100-120; that stretch reads QMFLSLAMGTTECVLLGVMAF. The Cytoplasmic segment spans residues 121–139; that stretch reads DRYVAICNPLRYPIIMSKD. The chain crosses the membrane as a helical span at residues 140–160; it reads AYVPMAAGSWIIGAVNSAVQT. Residues 161–197 lie on the Extracellular side of the membrane; sequence VFVVQLPFCRNNIINHFTCEILAVMKLACADISGNEF. Residues 198–217 traverse the membrane as a helical segment; it reads ILLVTTTLFLLTPLLLIIVS. Over 218–237 the chain is Cytoplasmic; sequence YTLIILSIFKISSSEGRSKP. The chain crosses the membrane as a helical span at residues 238-258; it reads SSTCSARLTVVITFCGTIFLM. The Extracellular segment spans residues 259-277; sequence YMKPKSQETLNSDDLDATD. The chain crosses the membrane as a helical span at residues 278–298; sequence KLIFIFYRVMTPMMNPLIYSL. The Cytoplasmic segment spans residues 299 to 318; that stretch reads RNKDVKEAVKHLLRRKNFNK.

This sequence belongs to the G-protein coupled receptor 1 family.

It localises to the cell membrane. Its function is as follows. Odorant receptor. The chain is Olfactory receptor 13C5 (OR13C5) from Homo sapiens (Human).